Consider the following 426-residue polypeptide: Histidine--tRNA ligase (426 aa).

Belongs to the class-II aminoacyl-tRNA synthetase family. As to quaternary structure, homodimer.

It localises to the cytoplasm. The enzyme catalyses tRNA(His) + L-histidine + ATP = L-histidyl-tRNA(His) + AMP + diphosphate + H(+). The chain is Histidine--tRNA ligase from Streptococcus agalactiae serotype III (strain NEM316).